The sequence spans 361 residues: Molybdenum import ATP-binding protein ModC 1 (361 aa).

The ABC transporter domain maps to 1–237 (MPADGIRARF…LDLPTAFHED (237 aa)). An ATP-binding site is contributed by 35-42 (GHSGSGKT). Residues 296–361 (DSSITNVLPA…AQIKAVALLG (66 aa)) form the Mop domain.

Belongs to the ABC transporter superfamily. Molybdate importer (TC 3.A.1.8) family. As to quaternary structure, the complex is composed of two ATP-binding proteins (ModC), two transmembrane proteins (ModB) and a solute-binding protein (ModA).

It localises to the cell inner membrane. It carries out the reaction molybdate(out) + ATP + H2O = molybdate(in) + ADP + phosphate + H(+). Functionally, part of the ABC transporter complex ModABC involved in molybdenum import. Responsible for energy coupling to the transport system. The sequence is that of Molybdenum import ATP-binding protein ModC 1 from Azotobacter vinelandii.